The primary structure comprises 112 residues: Small ribosomal subunit protein bS6 (112 aa).

It belongs to the bacterial ribosomal protein bS6 family.

Its function is as follows. Binds together with bS18 to 16S ribosomal RNA. The sequence is that of Small ribosomal subunit protein bS6 from Azobacteroides pseudotrichonymphae genomovar. CFP2.